The following is a 233-amino-acid chain: Biosynthetic peptidoglycan transglycosylase (233 aa).

Residues 8-28 form a helical membrane-spanning segment; that stretch reads LIALPVGIFIFFNAYVYGNII.

It belongs to the glycosyltransferase 51 family.

The protein resides in the cell inner membrane. The catalysed reaction is [GlcNAc-(1-&gt;4)-Mur2Ac(oyl-L-Ala-gamma-D-Glu-L-Lys-D-Ala-D-Ala)](n)-di-trans,octa-cis-undecaprenyl diphosphate + beta-D-GlcNAc-(1-&gt;4)-Mur2Ac(oyl-L-Ala-gamma-D-Glu-L-Lys-D-Ala-D-Ala)-di-trans,octa-cis-undecaprenyl diphosphate = [GlcNAc-(1-&gt;4)-Mur2Ac(oyl-L-Ala-gamma-D-Glu-L-Lys-D-Ala-D-Ala)](n+1)-di-trans,octa-cis-undecaprenyl diphosphate + di-trans,octa-cis-undecaprenyl diphosphate + H(+). It functions in the pathway cell wall biogenesis; peptidoglycan biosynthesis. In terms of biological role, peptidoglycan polymerase that catalyzes glycan chain elongation from lipid-linked precursors. The chain is Biosynthetic peptidoglycan transglycosylase from Neisseria meningitidis serogroup B (strain ATCC BAA-335 / MC58).